The following is a 543-amino-acid chain: Oxalate--CoA ligase (543 aa).

196-207 (HTSGTTSTPKTV) contributes to the ATP binding site. The FACS motif lies at 410-458 (ENYFRTGDQGYFDPEGFLVLTGRIKELINRGGEKISPIELDGIMLSHPK). A C-terminal peroxisome targeting signal (PTS1) motif is present at residues 541–543 (SKL).

Belongs to the ATP-dependent AMP-binding enzyme family. As to quaternary structure, interacts with PEX5.

The protein localises to the peroxisome matrix. Its subcellular location is the peroxisome membrane. The enzyme catalyses oxalate + ATP + CoA = oxalyl-CoA + AMP + diphosphate. Catalyzes the first step in a degradation pathway of oxalate to CO(2) to protect the cell against the harmful effects of oxalate derived from endogenous processes or an environmental sources. This chain is Oxalate--CoA ligase, found in Saccharomyces cerevisiae (strain ATCC 204508 / S288c) (Baker's yeast).